The sequence spans 553 residues: Putative ABC transporter ATP-binding protein BCE_3323 (553 aa).

2 consecutive ABC transporter domains span residues 7–245 (AEIN…FRPF) and 295–527 (LSAE…SINR). Residues 41-48 (GGSGSGKT) and 329-336 (GKNGTGKS) contribute to the ATP site.

The protein belongs to the ABC transporter superfamily.

The protein localises to the cell membrane. Its function is as follows. Probably part of an ABC transporter complex. Responsible for energy coupling to the transport system. This Bacillus cereus (strain ATCC 10987 / NRS 248) protein is Putative ABC transporter ATP-binding protein BCE_3323.